The sequence spans 256 residues: METQALQKVEQYALKKQNIFASSKIRYVLRSILASIFIGFGITAASKTGSYFFMADSPFAFPAAAVTFGAAILMIAYGGGDLFTGNTFYFTYTALRKKISWRDTLYLWMSSYAGNLIGAILFAILISATGLFEEPSVHSFLIHLAEHKMEPPASELFFRGMLCNWLVCLAFFIPMSLKGEGAKLFTMMLFVFCFFISGFEHSIANMCTFAISLLIEHPDTVTLMGAVRNLIPVTLGNLTAGIVMMGWMYYTLNPDQ.

The next 7 membrane-spanning stretches (helical) occupy residues 32 to 52, 59 to 79, 112 to 132, 156 to 176, 184 to 204, 207 to 227, and 230 to 250; these read ILASIFIGFGITAASKTGSYF, FAFPAAAVTFGAAILMIAYGG, YAGNLIGAILFAILISATGLF, LFFRGMLCNWLVCLAFFIPMS, LFTMMLFVFCFFISGFEHSIA, CTFAISLLIEHPDTVTLMGAV, and LIPVTLGNLTAGIVMMGWMYY.

It belongs to the FNT transporter (TC 1.A.16) family.

Its subcellular location is the cell membrane. This is an uncharacterized protein from Bacillus subtilis (strain 168).